The sequence spans 236 residues: Uridylate kinase (236 aa).

11–14 (KFSG) lines the ATP pocket. UMP is bound at residue glycine 53. The ATP site is built by glycine 54 and arginine 58. UMP is bound by residues aspartate 73 and 134–141 (TGSPFFTT). 3 residues coordinate ATP: threonine 161, tyrosine 167, and aspartate 170.

It belongs to the UMP kinase family. As to quaternary structure, homohexamer.

It localises to the cytoplasm. The catalysed reaction is UMP + ATP = UDP + ADP. It functions in the pathway pyrimidine metabolism; CTP biosynthesis via de novo pathway; UDP from UMP (UMPK route): step 1/1. With respect to regulation, inhibited by UTP. Its function is as follows. Catalyzes the reversible phosphorylation of UMP to UDP. The protein is Uridylate kinase of Hydrogenovibrio crunogenus (strain DSM 25203 / XCL-2) (Thiomicrospira crunogena).